Consider the following 311-residue polypeptide: Protoheme IX farnesyltransferase 1 (311 aa).

9 helical membrane-spanning segments follow: residues 31-51, 52-72, 97-117, 119-139, 152-172, 179-199, 225-245, 247-267, and 281-301; these read VMAL…GAVN, PVIA…AGAL, VTPG…VMTL, VLVG…YIVI, IVIG…AATG, LVLF…LALF, ILAY…FGFT, GYYG…SWKV, and LFAY…ADTI.

It belongs to the UbiA prenyltransferase family. Protoheme IX farnesyltransferase subfamily.

The protein resides in the cell inner membrane. The enzyme catalyses heme b + (2E,6E)-farnesyl diphosphate + H2O = Fe(II)-heme o + diphosphate. It functions in the pathway porphyrin-containing compound metabolism; heme O biosynthesis; heme O from protoheme: step 1/1. Its function is as follows. Converts heme B (protoheme IX) to heme O by substitution of the vinyl group on carbon 2 of heme B porphyrin ring with a hydroxyethyl farnesyl side group. The sequence is that of Protoheme IX farnesyltransferase 1 from Mesorhizobium japonicum (strain LMG 29417 / CECT 9101 / MAFF 303099) (Mesorhizobium loti (strain MAFF 303099)).